The primary structure comprises 209 residues: RNA chaperone ProQ (209 aa).

A disordered region spans residues Glu105 to Ala148.

The protein belongs to the ProQ family.

It localises to the cytoplasm. RNA chaperone with significant RNA binding, RNA strand exchange and RNA duplexing activities. The chain is RNA chaperone ProQ from Shewanella baltica (strain OS223).